Reading from the N-terminus, the 570-residue chain is Sulfite reductase [NADPH] hemoprotein beta-component (570 aa).

4 residues coordinate [4Fe-4S] cluster: Cys434, Cys440, Cys479, and Cys483. Cys483 contributes to the siroheme binding site.

Belongs to the nitrite and sulfite reductase 4Fe-4S domain family. In terms of assembly, alpha(8)-beta(8). The alpha component is a flavoprotein, the beta component is a hemoprotein. It depends on siroheme as a cofactor. Requires [4Fe-4S] cluster as cofactor.

The catalysed reaction is hydrogen sulfide + 3 NADP(+) + 3 H2O = sulfite + 3 NADPH + 4 H(+). It functions in the pathway sulfur metabolism; hydrogen sulfide biosynthesis; hydrogen sulfide from sulfite (NADPH route): step 1/1. Its function is as follows. Component of the sulfite reductase complex that catalyzes the 6-electron reduction of sulfite to sulfide. This is one of several activities required for the biosynthesis of L-cysteine from sulfate. This Salmonella arizonae (strain ATCC BAA-731 / CDC346-86 / RSK2980) protein is Sulfite reductase [NADPH] hemoprotein beta-component.